The primary structure comprises 166 residues: Probable DHNTP pyrophosphohydrolase (166 aa).

A Nudix hydrolase domain is found at 42–166 (DLQLSASALV…FKKYYRYKNI (125 aa)). Residues 73–94 (GHVELKESPLDTAIREFHEETG) carry the Nudix box motif. Residues E88 and E92 each coordinate Mg(2+).

It belongs to the Nudix hydrolase family. Monomer. The cofactor is Mg(2+).

Its pathway is cofactor biosynthesis; tetrahydrofolate biosynthesis; 2-amino-4-hydroxy-6-hydroxymethyl-7,8-dihydropteridine diphosphate from 7,8-dihydroneopterin triphosphate: step 1/4. Functionally, probably mediates the removal of pyrophosphate from dihydroneopterin triphosphate (DHNTP), a possible step in the pterin branch of the folate synthesis pathway. This is Probable DHNTP pyrophosphohydrolase (folQ) from Lactococcus lactis subsp. cremoris (strain MG1363).